The sequence spans 1408 residues: DNA-directed RNA polymerase subunit beta' (1408 aa).

Zn(2+)-binding residues include C70, C72, C85, and C88. Mg(2+) contacts are provided by D458, D460, and D462. Zn(2+)-binding residues include C813, C887, C894, and C897. The interval 1387–1408 (AELEAATATAPADAGGDSPATE) is disordered. The segment covering 1389-1408 (LEAATATAPADAGGDSPATE) has biased composition (low complexity).

This sequence belongs to the RNA polymerase beta' chain family. In terms of assembly, the RNAP catalytic core consists of 2 alpha, 1 beta, 1 beta' and 1 omega subunit. When a sigma factor is associated with the core the holoenzyme is formed, which can initiate transcription. The cofactor is Mg(2+). Zn(2+) is required as a cofactor.

The catalysed reaction is RNA(n) + a ribonucleoside 5'-triphosphate = RNA(n+1) + diphosphate. DNA-dependent RNA polymerase catalyzes the transcription of DNA into RNA using the four ribonucleoside triphosphates as substrates. The polypeptide is DNA-directed RNA polymerase subunit beta' (Polaromonas sp. (strain JS666 / ATCC BAA-500)).